The primary structure comprises 212 residues: 3-isopropylmalate dehydratase small subunit (212 aa).

Belongs to the LeuD family. LeuD type 1 subfamily. Heterodimer of LeuC and LeuD.

The catalysed reaction is (2R,3S)-3-isopropylmalate = (2S)-2-isopropylmalate. Its pathway is amino-acid biosynthesis; L-leucine biosynthesis; L-leucine from 3-methyl-2-oxobutanoate: step 2/4. Its function is as follows. Catalyzes the isomerization between 2-isopropylmalate and 3-isopropylmalate, via the formation of 2-isopropylmaleate. This is 3-isopropylmalate dehydratase small subunit from Laribacter hongkongensis (strain HLHK9).